Consider the following 501-residue polypeptide: Cobyric acid synthase (501 aa).

In terms of domain architecture, GATase cobBQ-type spans 252–443 (DLDVAVIDLD…LHGIFDNPYW (192 aa)). Catalysis depends on Cys333, which acts as the Nucleophile. His435 is a catalytic residue.

Belongs to the CobB/CobQ family. CobQ subfamily.

Its pathway is cofactor biosynthesis; adenosylcobalamin biosynthesis. Catalyzes amidations at positions B, D, E, and G on adenosylcobyrinic A,C-diamide. NH(2) groups are provided by glutamine, and one molecule of ATP is hydrogenolyzed for each amidation. This chain is Cobyric acid synthase, found in Limosilactobacillus reuteri (strain DSM 20016) (Lactobacillus reuteri).